A 364-amino-acid chain; its full sequence is tRNA 2-selenouridine synthase (364 aa).

A Rhodanese domain is found at Leu-14–Trp-137. Catalysis depends on Cys-97, which acts as the S-selanylcysteine intermediate.

The protein belongs to the SelU family. As to quaternary structure, monomer.

The catalysed reaction is 5-methylaminomethyl-2-thiouridine(34) in tRNA + selenophosphate + (2E)-geranyl diphosphate + H2O + H(+) = 5-methylaminomethyl-2-selenouridine(34) in tRNA + (2E)-thiogeraniol + phosphate + diphosphate. The enzyme catalyses 5-methylaminomethyl-2-thiouridine(34) in tRNA + (2E)-geranyl diphosphate = 5-methylaminomethyl-S-(2E)-geranyl-thiouridine(34) in tRNA + diphosphate. It carries out the reaction 5-methylaminomethyl-S-(2E)-geranyl-thiouridine(34) in tRNA + selenophosphate + H(+) = 5-methylaminomethyl-2-(Se-phospho)selenouridine(34) in tRNA + (2E)-thiogeraniol. It catalyses the reaction 5-methylaminomethyl-2-(Se-phospho)selenouridine(34) in tRNA + H2O = 5-methylaminomethyl-2-selenouridine(34) in tRNA + phosphate. Functionally, involved in the post-transcriptional modification of the uridine at the wobble position (U34) of tRNA(Lys), tRNA(Glu) and tRNA(Gln). Catalyzes the conversion of 2-thiouridine (S2U-RNA) to 2-selenouridine (Se2U-RNA). Acts in a two-step process involving geranylation of 2-thiouridine (S2U) to S-geranyl-2-thiouridine (geS2U) and subsequent selenation of the latter derivative to 2-selenouridine (Se2U) in the tRNA chain. The chain is tRNA 2-selenouridine synthase from Salmonella paratyphi A (strain ATCC 9150 / SARB42).